A 210-amino-acid chain; its full sequence is Cytochrome c biogenesis ATP-binding export protein CcmA (210 aa).

The region spanning Leu4–Glu207 is the ABC transporter domain. An ATP-binding site is contributed by Gly36–Thr43.

The protein belongs to the ABC transporter superfamily. CcmA exporter (TC 3.A.1.107) family. The complex is composed of two ATP-binding proteins (CcmA) and two transmembrane proteins (CcmB).

Its subcellular location is the cell inner membrane. It carries out the reaction heme b(in) + ATP + H2O = heme b(out) + ADP + phosphate + H(+). In terms of biological role, part of the ABC transporter complex CcmAB involved in the biogenesis of c-type cytochromes; once thought to export heme, this seems not to be the case, but its exact role is uncertain. Responsible for energy coupling to the transport system. In Paracoccus denitrificans (strain Pd 1222), this protein is Cytochrome c biogenesis ATP-binding export protein CcmA.